Here is a 1008-residue protein sequence, read N- to C-terminus: Chitin synthase C (1008 aa).

The tract at residues 1–160 (MIYEMMVMKR…GGRTIDPNNR (160 aa)) is disordered. Residues 10 to 19 (RSANSRAQNN) show a composition bias toward low complexity. Polar residues predominate over residues 34 to 45 (ESPSRPVSSLGN). N312 carries an N-linked (GlcNAc...) asparagine glycan. Helical transmembrane passes span 642 to 662 (FMQL…FYFI), 682 to 702 (IFVI…IISM), 717 to 737 (IIVY…LVVI), 755 to 775 (LFVN…YASF), and 787 to 807 (SAAY…YAFC). N833 is a glycosylation site (N-linked (GlcNAc...) asparagine). 2 consecutive transmembrane segments (helical) span residues 887–907 (MVSI…EVYG) and 910–930 (AGGT…LALI). An N-linked (GlcNAc...) asparagine glycan is attached at N961.

This sequence belongs to the chitin synthase family. Class II subfamily.

It localises to the cell membrane. The catalysed reaction is [(1-&gt;4)-N-acetyl-beta-D-glucosaminyl](n) + UDP-N-acetyl-alpha-D-glucosamine = [(1-&gt;4)-N-acetyl-beta-D-glucosaminyl](n+1) + UDP + H(+). In terms of biological role, polymerizes chitin, a structural polymer of the cell wall and septum, by transferring the sugar moiety of UDP-GlcNAc to the non-reducing end of the growing chitin polymer. Involved in cell wall integrity and mycelial morphology. Plays an important role in septal growth or maintenance. Acts as a positive regulator of conidiation, cellular responses to oxidative stresses, and the production of malic acid. Negatively regulates the citric acid production. This Aspergillus niger (strain ATCC MYA-4892 / CBS 513.88 / FGSC A1513) protein is Chitin synthase C.